The sequence spans 190 residues: Probable nicotinate-nucleotide adenylyltransferase (190 aa).

This sequence belongs to the NadD family.

It carries out the reaction nicotinate beta-D-ribonucleotide + ATP + H(+) = deamido-NAD(+) + diphosphate. It functions in the pathway cofactor biosynthesis; NAD(+) biosynthesis; deamido-NAD(+) from nicotinate D-ribonucleotide: step 1/1. Its function is as follows. Catalyzes the reversible adenylation of nicotinate mononucleotide (NaMN) to nicotinic acid adenine dinucleotide (NaAD). In Staphylococcus saprophyticus subsp. saprophyticus (strain ATCC 15305 / DSM 20229 / NCIMB 8711 / NCTC 7292 / S-41), this protein is Probable nicotinate-nucleotide adenylyltransferase.